The following is a 188-amino-acid chain: Peptide deformylase (188 aa).

Positions 109 and 152 each coordinate Fe cation. E153 is an active-site residue. H156 is a Fe cation binding site.

Belongs to the polypeptide deformylase family. Fe(2+) is required as a cofactor.

It carries out the reaction N-terminal N-formyl-L-methionyl-[peptide] + H2O = N-terminal L-methionyl-[peptide] + formate. In terms of biological role, removes the formyl group from the N-terminal Met of newly synthesized proteins. Requires at least a dipeptide for an efficient rate of reaction. N-terminal L-methionine is a prerequisite for activity but the enzyme has broad specificity at other positions. This is Peptide deformylase from Chloroflexus aggregans (strain MD-66 / DSM 9485).